Here is a 1236-residue protein sequence, read N- to C-terminus: DNA topoisomerase 2 (1236 aa).

Residues Asn65, Asn96, 124–126 (SSN), 137–144 (GRHGYGAK), and 354–356 (QSK) each bind ATP. Positions 434 to 548 (RTLIITEGDS…KLLQNNPGYI (115 aa)) constitute a Toprim domain. Residues Glu440, Asp517, and Asp519 each contribute to the Mg(2+) site. In terms of domain architecture, Topo IIA-type catalytic spans 685-1101 (IPHCVDGLKP…TPVKMWLTEL (417 aa)). The O-(5'-phospho-DNA)-tyrosine intermediate role is filled by Tyr775. The segment at 956–965 (ALAQRIYING) is interaction with DNA. Residues 1161–1211 (YEKPPPSKRRPGESVGGARPSDSAARTVGKRLVGSRSEFKNKKPMSRKNNV) are disordered.

This sequence belongs to the type II topoisomerase family. Homodimer. Mg(2+) serves as cofactor. Requires Mn(2+) as cofactor. It depends on Ca(2+) as a cofactor.

It localises to the nucleus. The enzyme catalyses ATP-dependent breakage, passage and rejoining of double-stranded DNA.. Control of topological states of DNA by transient breakage and subsequent rejoining of DNA strands. Topoisomerase II makes double-strand breaks. The sequence is that of DNA topoisomerase 2 (TOP2) from Leishmania chagasi.